A 263-amino-acid chain; its full sequence is uncharacterized protein (263 aa).

Position 31–38 (31–38) interacts with ATP; the sequence is GPTGSGKT.

This sequence belongs to the CbbQ/NirQ/NorQ/GpvN family.

This is an uncharacterized protein from Staphylococcus epidermidis (strain ATCC 35984 / DSM 28319 / BCRC 17069 / CCUG 31568 / BM 3577 / RP62A).